The following is a 201-amino-acid chain: Dynactin subunit 6 (201 aa).

The protein belongs to the dynactin subunits 5/6 family. Dynactin subunit 6 subfamily. In terms of assembly, member of the pointed-end complex of the dynactin shoulder complex which contains dctn4, dctn5 and dctn6 subunits and Actr10. Within the complex dctn6 forms a heterodimer with dctn5. Interacts with plk1.

It is found in the cytoplasm. The protein resides in the cytoskeleton. Its subcellular location is the chromosome. The protein localises to the centromere. It localises to the kinetochore. Its function is as follows. Part of the dynactin complex that activates the molecular motor dynein for ultra-processive transport along microtubules. This chain is Dynactin subunit 6 (dctn6), found in Xenopus tropicalis (Western clawed frog).